Reading from the N-terminus, the 475-residue chain is Adenosylhomocysteinase (475 aa).

Substrate contacts are provided by Thr-66, Asp-141, and Glu-201. 202–204 (TTT) serves as a coordination point for NAD(+). Substrate is bound by residues Lys-231 and Asp-235. NAD(+)-binding positions include Asn-236, 265–270 (GYGEVG), Glu-288, Asn-323, 344–346 (IGH), and Asn-389.

The protein belongs to the adenosylhomocysteinase family. NAD(+) is required as a cofactor.

The protein resides in the cytoplasm. It carries out the reaction S-adenosyl-L-homocysteine + H2O = L-homocysteine + adenosine. Its pathway is amino-acid biosynthesis; L-homocysteine biosynthesis; L-homocysteine from S-adenosyl-L-homocysteine: step 1/1. Functionally, may play a key role in the regulation of the intracellular concentration of adenosylhomocysteine. The polypeptide is Adenosylhomocysteinase (Geobacter sulfurreducens (strain ATCC 51573 / DSM 12127 / PCA)).